The primary structure comprises 400 residues: Enoyl-[acyl-carrier-protein] reductase [NADH] (400 aa).

NAD(+) is bound by residues 48–53, 74–75, 111–112, and 139–140; these read GASTGY, FE, DA, and LA. Residue Tyr225 coordinates substrate. Tyr235 functions as the Proton donor in the catalytic mechanism. NAD(+) contacts are provided by residues Lys244 and 273-275; that span reads VVT.

The protein belongs to the TER reductase family. Monomer.

The catalysed reaction is a 2,3-saturated acyl-[ACP] + NAD(+) = a (2E)-enoyl-[ACP] + NADH + H(+). It participates in lipid metabolism; fatty acid biosynthesis. In terms of biological role, involved in the final reduction of the elongation cycle of fatty acid synthesis (FAS II). Catalyzes the reduction of a carbon-carbon double bond in an enoyl moiety that is covalently linked to an acyl carrier protein (ACP). The sequence is that of Enoyl-[acyl-carrier-protein] reductase [NADH] from Burkholderia cenocepacia (strain ATCC BAA-245 / DSM 16553 / LMG 16656 / NCTC 13227 / J2315 / CF5610) (Burkholderia cepacia (strain J2315)).